The sequence spans 155 residues: Large-conductance mechanosensitive channel (155 aa).

A run of 2 helical transmembrane segments spans residues 25–45 (VLDL…VTSL) and 98–118 (GDFI…FLIV).

The protein belongs to the MscL family. As to quaternary structure, homopentamer.

It localises to the cell inner membrane. Functionally, channel that opens in response to stretch forces in the membrane lipid bilayer. May participate in the regulation of osmotic pressure changes within the cell. The sequence is that of Large-conductance mechanosensitive channel from Novosphingobium aromaticivorans (strain ATCC 700278 / DSM 12444 / CCUG 56034 / CIP 105152 / NBRC 16084 / F199).